We begin with the raw amino-acid sequence, 671 residues long: Zinc finger protein 568 (671 aa).

The interval 1–31 (MERLSQMAGRRAWCAEDSVPRQEEEDRTRPS) is disordered. Basic and acidic residues predominate over residues 18–29 (SVPRQEEEDRTR). 2 KRAB domains span residues 34 to 105 (VTFK…RRSP) and 124 to 195 (LRFE…IWHP). Residues 214 to 366 (EKMAKKHTCP…QGSERPHKCK (153 aa)) form a disordered region. 3 stretches are compositionally biased toward basic and acidic residues: residues 226–251 (EDSK…EGHL), 296–312 (IERE…EHAQ), and 329–341 (RPQE…ERKK). 11 consecutive C2H2-type zinc fingers follow at residues 363 to 385 (HKCK…QKLH), 391 to 413 (YKCQ…HRVH), 419 to 441 (FECK…QRIH), 447 to 469 (HKCK…LLTH), 475 to 497 (FECK…QMSH), 503 to 525 (HKCK…QSVH), 531 to 553 (YKCK…QRAH), 559 to 581 (YKCK…QKVH), 587 to 609 (HKCK…ERSH), 615 to 637 (YECK…QKIH), and 643 to 665 (YKCQ…QRIH).

This sequence belongs to the krueppel C2H2-type zinc-finger protein family. In terms of assembly, interacts with TRIM28. As to expression, little or no expression detected in most adult tissues (brain, liver, kidney, spleen, testis, ovary). In the hippocampus, detected in neural stem cells within the subventricular zone and subgranular zone.

The protein resides in the nucleus. Has transcriptional repression activity, partially through the recruitment of the corepressor TRIM28 but also has repression activity independently of this interaction. Essential during embryonic development, where it acts as direct repressor of IGF2-P0, placental-specific transcript of IGF2, in early development and regulates convergent extension movements required for axis elongation and tissue morphogenesis in all germ layers. Also important for normal morphogenesis of extraembryonic tissues including the yolk sac, extraembryonic mesoderm and placenta. May enhance proliferation or maintenance of neural stem cells. The polypeptide is Zinc finger protein 568 (Mus musculus (Mouse)).